The chain runs to 148 residues: Small ribosomal subunit protein bS16 (148 aa).

The interval 107–148 (AAARAAAGAEDRPATTPKKAKKAASADGADAPAADAPTAAGQ) is disordered. The span at 129–148 (AASADGADAPAADAPTAAGQ) shows a compositional bias: low complexity.

Belongs to the bacterial ribosomal protein bS16 family.

The protein is Small ribosomal subunit protein bS16 of Frankia alni (strain DSM 45986 / CECT 9034 / ACN14a).